A 172-amino-acid polypeptide reads, in one-letter code: Early nodulin-like protein 17 (172 aa).

The N-terminal stretch at Met1–Ala26 is a signal peptide. The Phytocyanin domain occupies Lys27–Lys127. N-linked (GlcNAc...) asparagine glycans are attached at residues Asn42, Asn73, Asn88, and Asn101. Cys80 and Cys115 are joined by a disulfide. The GPI-anchor amidated glycine moiety is linked to residue Gly141. Residues Ser142–Trp172 constitute a propeptide, removed in mature form.

Belongs to the early nodulin-like (ENODL) family.

The protein resides in the cell membrane. May act as a carbohydrate transporter. This chain is Early nodulin-like protein 17, found in Arabidopsis thaliana (Mouse-ear cress).